The primary structure comprises 34 residues: Turripeptide OL127 (34 aa).

Contains 4 disulfide bonds. In terms of tissue distribution, expressed by the venom duct.

It localises to the secreted. Functionally, acts as a neurotoxin by inhibiting an ion channel. This Iotyrris olangoensis (Sea snail) protein is Turripeptide OL127.